The chain runs to 20 residues: Short cationic peptide-4d (20 aa).

Glu-20 carries the post-translational modification Glutamic acid 1-amide.

In terms of tissue distribution, expressed by the venom gland.

The protein localises to the secreted. In Cupiennius salei (American wandering spider), this protein is Short cationic peptide-4d.